A 207-amino-acid chain; its full sequence is MEVDVNGESRSALTTLPLPVAEASSPGKAEAEKPRCSSTPCSPMRRTVSGYQILHMDSNYLVGFTTGEELLKLAQKCTGAEESKGEAVPSLRSKQLDVGLARSSRLYKTRSRYYQPYEIPAVNGRRRRRMPSSGDKCTKSLPYEPYKALHGPLPLCLLKGKRAHSKSLDYLNLDKMNIKEPADTEVLQYQLQHLTLRGDRVFARNNT.

An N-acetylmethionine modification is found at methionine 1. Positions 1-41 are disordered; the sequence is MEVDVNGESRSALTTLPLPVAEASSPGKAEAEKPRCSSTPC. Serine 25, serine 140, and serine 167 each carry phosphoserine.

The protein belongs to the UNC119-binding protein family. In terms of assembly, interacts with UNC119 and UNC119B; interaction preferentially takes place when UNC119 and UNC119B are unliganded with myristoylated proteins.

It localises to the cytoplasm. Its subcellular location is the cell projection. The protein resides in the cilium. Its function is as follows. Regulates the macrophage function, by enhancing the resolution of inflammation and wound repair functions mediated by M2 macrophages. The regulation of macrophage function is, due at least in part, to its ability to inhibit glycolysis. May play also a role in trafficking of proteins via its interaction with UNC119 and UNC119B cargo adapters: may help the release of UNC119 and UNC119B cargo or the recycling of UNC119 and UNC119B. May play a role in ciliary membrane localization via its interaction with UNC119B and protein transport into photoreceptor cells. In Bos taurus (Bovine), this protein is Macrophage immunometabolism regulator (MACIR).